Here is a 510-residue protein sequence, read N- to C-terminus: NAD(P)H-quinone oxidoreductase subunit 2 B, chloroplastic (510 aa).

Transmembrane regions (helical) follow at residues 24-44 (LLLF…GLIL), 57-77 (IPWL…ALLF), 99-119 (IFQF…VEYI), 124-144 (MAIT…MFLC), 149-169 (LITI…LSGY), 183-203 (YLLM…WLYG), 227-247 (PGIS…LSLA), 295-315 (WHLL…LIAI), 323-343 (MLAY…IVGD), 354-374 (YMLF…LFGL), 395-415 (ALSL…AGFF), 418-438 (LHLF…IGLL), and 484-504 (MIVC…IIAI).

Belongs to the complex I subunit 2 family. As to quaternary structure, NDH is composed of at least 16 different subunits, 5 of which are encoded in the nucleus.

The protein resides in the plastid. The protein localises to the chloroplast thylakoid membrane. It catalyses the reaction a plastoquinone + NADH + (n+1) H(+)(in) = a plastoquinol + NAD(+) + n H(+)(out). It carries out the reaction a plastoquinone + NADPH + (n+1) H(+)(in) = a plastoquinol + NADP(+) + n H(+)(out). NDH shuttles electrons from NAD(P)H:plastoquinone, via FMN and iron-sulfur (Fe-S) centers, to quinones in the photosynthetic chain and possibly in a chloroplast respiratory chain. The immediate electron acceptor for the enzyme in this species is believed to be plastoquinone. Couples the redox reaction to proton translocation, and thus conserves the redox energy in a proton gradient. The sequence is that of NAD(P)H-quinone oxidoreductase subunit 2 B, chloroplastic from Citrus sinensis (Sweet orange).